Here is a 102-residue protein sequence, read N- to C-terminus: Large ribosomal subunit protein bL21 (102 aa).

It belongs to the bacterial ribosomal protein bL21 family. Part of the 50S ribosomal subunit. Contacts protein L20.

This protein binds to 23S rRNA in the presence of protein L20. The sequence is that of Large ribosomal subunit protein bL21 from Campylobacter jejuni subsp. doylei (strain ATCC BAA-1458 / RM4099 / 269.97).